A 367-amino-acid polypeptide reads, in one-letter code: tRNA pseudouridine synthase D (367 aa).

The active-site Nucleophile is Asp80. In terms of domain architecture, TRUD spans Gly156 to Leu316.

It belongs to the pseudouridine synthase TruD family.

The enzyme catalyses uridine(13) in tRNA = pseudouridine(13) in tRNA. Functionally, responsible for synthesis of pseudouridine from uracil-13 in transfer RNAs. The chain is tRNA pseudouridine synthase D from Xanthomonas campestris pv. campestris (strain 8004).